A 187-amino-acid polypeptide reads, in one-letter code: Protein GrpE (187 aa).

Over residues 1-11 the composition is skewed to basic and acidic residues; sequence MTDSSNEHETE. A disordered region spans residues 1-23; it reads MTDSSNEHETENPSVPNPDNEIQ.

This sequence belongs to the GrpE family. In terms of assembly, homodimer.

The protein resides in the cytoplasm. Participates actively in the response to hyperosmotic and heat shock by preventing the aggregation of stress-denatured proteins, in association with DnaK and GrpE. It is the nucleotide exchange factor for DnaK and may function as a thermosensor. Unfolded proteins bind initially to DnaJ; upon interaction with the DnaJ-bound protein, DnaK hydrolyzes its bound ATP, resulting in the formation of a stable complex. GrpE releases ADP from DnaK; ATP binding to DnaK triggers the release of the substrate protein, thus completing the reaction cycle. Several rounds of ATP-dependent interactions between DnaJ, DnaK and GrpE are required for fully efficient folding. In Chlamydia felis (strain Fe/C-56) (Chlamydophila felis), this protein is Protein GrpE.